The sequence spans 293 residues: 4-hydroxy-tetrahydrodipicolinate synthase (293 aa).

A pyruvate-binding site is contributed by T50. The Proton donor/acceptor role is filled by Y138. K166 acts as the Schiff-base intermediate with substrate in catalysis. Residue V206 participates in pyruvate binding.

The protein belongs to the DapA family. In terms of assembly, homotetramer; dimer of dimers.

It is found in the cytoplasm. The enzyme catalyses L-aspartate 4-semialdehyde + pyruvate = (2S,4S)-4-hydroxy-2,3,4,5-tetrahydrodipicolinate + H2O + H(+). Its pathway is amino-acid biosynthesis; L-lysine biosynthesis via DAP pathway; (S)-tetrahydrodipicolinate from L-aspartate: step 3/4. Catalyzes the condensation of (S)-aspartate-beta-semialdehyde [(S)-ASA] and pyruvate to 4-hydroxy-tetrahydrodipicolinate (HTPA). This is 4-hydroxy-tetrahydrodipicolinate synthase from Cutibacterium acnes (strain DSM 16379 / KPA171202) (Propionibacterium acnes).